Here is a 433-residue protein sequence, read N- to C-terminus: Schlafen-like protein 2 (433 aa).

Residues 1-168 (MADTSPRESK…LSVNFGSQPF (168 aa)) enclose the B30.2/SPRY domain. The segment at 199-400 (EHVVVKLPFA…RRMASNKCVY (202 aa)) is SLFN-like fold. Catalysis depends on residues Glu211 and Glu216.

This sequence belongs to the Schlafen family. Component of the trimeric PUCH (precursor of 21U RNA 5'-end cleavage holoenzyme) complex; consisting of tofu-1, tofu-2 and either slfl-3 or slfl-4. Within the complex, interacts (via N-terminus) with tofu-1 (via N-terminus); the interaction stabilizes tofu-2 and may form a functional nuclease. Within the complex, interacts (via N-terminus) with slfl-3 (via N-terminus); the presence of tofu-1 is required for this interaction. Requires Mg(2+) as cofactor. In terms of tissue distribution, expressed in the germline.

It localises to the cytoplasm. It is found in the mitochondrion. Inhibited by ethylenediaminetetraacetic acid (EDTA). Component of the trimeric PUCH (precursor of 21U RNA 5'-end cleavage holoenzyme) complex, that acts as an endoribonuclease processing the 5'-end of precursor Piwi-interacting RNAs (piRNAs). The PUCH complex consists of tofu-1, tofu-2 and either slfl-3 or slfl-4, with tofu-2 exhibiting endoribonuclease activity. PUCH-mediated processing strictly requires a 7-methyl-G cap (m7 G-cap) and an uracil at position three (U3). PUCH also exhibits a strict bias for piRNA precursors with an A or G at position 1. Mature piRNA production is enhanced by the interaction of PUCH with the PETISCO complex, which is stabilizing piRNA precursors and allows their processing by PUCH. The chain is Schlafen-like protein 2 from Caenorhabditis elegans.